A 57-amino-acid polypeptide reads, in one-letter code: Ribulose bisphosphate carboxylase large chain (57 aa).

Residues 1–2 constitute a propeptide that is removed on maturation; it reads MS. Pro3 is subject to N-acetylproline. Lys14 bears the N6,N6,N6-trimethyllysine mark.

The protein belongs to the RuBisCO large chain family. Type I subfamily. In terms of assembly, heterohexadecamer of 8 large chains and 8 small chains.

It is found in the plastid. The protein resides in the chloroplast. It catalyses the reaction 2 (2R)-3-phosphoglycerate + 2 H(+) = D-ribulose 1,5-bisphosphate + CO2 + H2O. The enzyme catalyses D-ribulose 1,5-bisphosphate + O2 = 2-phosphoglycolate + (2R)-3-phosphoglycerate + 2 H(+). RuBisCO catalyzes two reactions: the carboxylation of D-ribulose 1,5-bisphosphate, the primary event in carbon dioxide fixation, as well as the oxidative fragmentation of the pentose substrate in the photorespiration process. Both reactions occur simultaneously and in competition at the same active site. The protein is Ribulose bisphosphate carboxylase large chain (rbcL) of Buxus sempervirens (Common box).